The sequence spans 520 residues: 1,4-alpha-glucan branching enzyme TTHA1902 (520 aa).

The active-site Nucleophile is the E184. Residues R265 and G282 each contribute to the substrate site. The active-site Proton donor is the D353. Residues W404, D460, and Q469 each coordinate substrate.

Belongs to the glycosyl hydrolase 57 family.

The enzyme catalyses Transfers a segment of a (1-&gt;4)-alpha-D-glucan chain to a primary hydroxy group in a similar glucan chain.. The protein operates within glycan biosynthesis; glycogen biosynthesis. Its function is as follows. Catalyzes the formation of branch points in alpha-glucans by cleavage of an alpha-1,4 glycosidic bond and subsequent transfer of the cleaved-off oligosaccharide to a new alpha-1,6 position. The branch chain-length distribution of the reaction products shows degree of polymerization (DP) of 3 to 13, with two local maxima at DP 7 and DP 11. Exhibits an alpha-retaining catalytic mechanism. Is involved in glycogen biosynthesis. Shows a secondary activity, i.e. the hydrolysis of the substrate, being 4% of the total activity. Can use amylose as substrate but not alpha-1,4-linked oligosaccharides of 2-7 glucose residues, beta-cyclodextrin, 6-O-glucosyl-beta-cyclodextrin and 6-O-maltosyl-beta-cyclodextrin. Is not able to branch amylopectin further, it only hydrolyzes amylopectin. Thus, displays preference for linear and long substrates (amylose) over branched structures (amylopectin). The protein is 1,4-alpha-glucan branching enzyme TTHA1902 of Thermus thermophilus (strain ATCC 27634 / DSM 579 / HB8).